We begin with the raw amino-acid sequence, 55 residues long: UPF0391 membrane protein Sfum_0248 (55 aa).

Helical transmembrane passes span tryptophan 4–isoleucine 24 and alanine 28–serine 48.

Belongs to the UPF0391 family.

Its subcellular location is the cell membrane. This Syntrophobacter fumaroxidans (strain DSM 10017 / MPOB) protein is UPF0391 membrane protein Sfum_0248.